The following is a 360-amino-acid chain: Phospho-N-acetylmuramoyl-pentapeptide-transferase (360 aa).

10 helical membrane passes run 27-47 (IVSLLTALFISLWMGPHLIAW), 72-92 (PTMGGLMILFSITISVLMWAY), 94-114 (SNPYVWCVLFILIGYGIVGFI), 132-152 (WKYFWQSIIALAAAFTMYSIG), 168-188 (IMPQLGLLYVLLAYFVIVGTS), 199-219 (GLAIMPTVFVAAGFALVAWAT), 236-256 (AGELVIVCTAIVGAGLGFLWF), 263-283 (VFMGDVGSLALGGALGTIAVL), 288-308 (FLLVIMGGVFVVETLSVILQV), and 338-358 (VIVRFWIISLMLVLIGLATLK).

It belongs to the glycosyltransferase 4 family. MraY subfamily. Mg(2+) serves as cofactor.

The protein localises to the cell inner membrane. The enzyme catalyses UDP-N-acetyl-alpha-D-muramoyl-L-alanyl-gamma-D-glutamyl-meso-2,6-diaminopimeloyl-D-alanyl-D-alanine + di-trans,octa-cis-undecaprenyl phosphate = di-trans,octa-cis-undecaprenyl diphospho-N-acetyl-alpha-D-muramoyl-L-alanyl-D-glutamyl-meso-2,6-diaminopimeloyl-D-alanyl-D-alanine + UMP. The protein operates within cell wall biogenesis; peptidoglycan biosynthesis. Its function is as follows. Catalyzes the initial step of the lipid cycle reactions in the biosynthesis of the cell wall peptidoglycan: transfers peptidoglycan precursor phospho-MurNAc-pentapeptide from UDP-MurNAc-pentapeptide onto the lipid carrier undecaprenyl phosphate, yielding undecaprenyl-pyrophosphoryl-MurNAc-pentapeptide, known as lipid I. In Yersinia pseudotuberculosis serotype O:1b (strain IP 31758), this protein is Phospho-N-acetylmuramoyl-pentapeptide-transferase.